Consider the following 67-residue polypeptide: Large ribosomal subunit protein uL30 (67 aa).

The protein belongs to the universal ribosomal protein uL30 family. As to quaternary structure, part of the 50S ribosomal subunit.

In Sorangium cellulosum (strain So ce56) (Polyangium cellulosum (strain So ce56)), this protein is Large ribosomal subunit protein uL30.